The following is a 416-amino-acid chain: UDP-N-acetylmuramoylalanine--D-glutamate ligase (416 aa).

Position 108-114 (108-114) interacts with ATP; sequence GTTGKTT.

This sequence belongs to the MurCDEF family.

The protein resides in the cytoplasm. The catalysed reaction is UDP-N-acetyl-alpha-D-muramoyl-L-alanine + D-glutamate + ATP = UDP-N-acetyl-alpha-D-muramoyl-L-alanyl-D-glutamate + ADP + phosphate + H(+). Its pathway is cell wall biogenesis; peptidoglycan biosynthesis. Functionally, cell wall formation. Catalyzes the addition of glutamate to the nucleotide precursor UDP-N-acetylmuramoyl-L-alanine (UMA). In Chlamydia trachomatis serovar L2 (strain ATCC VR-902B / DSM 19102 / 434/Bu), this protein is UDP-N-acetylmuramoylalanine--D-glutamate ligase.